The primary structure comprises 1235 residues: ATP-dependent helicase/nuclease subunit A (1235 aa).

Residues A12–R482 enclose the UvrD-like helicase ATP-binding domain. A33–T40 serves as a coordination point for ATP. A UvrD-like helicase C-terminal domain is found at A509–G800.

The protein belongs to the helicase family. AddA subfamily. As to quaternary structure, heterodimer of AddA and AddB/RexB. It depends on Mg(2+) as a cofactor.

The catalysed reaction is Couples ATP hydrolysis with the unwinding of duplex DNA by translocating in the 3'-5' direction.. It carries out the reaction ATP + H2O = ADP + phosphate + H(+). Functionally, the heterodimer acts as both an ATP-dependent DNA helicase and an ATP-dependent, dual-direction single-stranded exonuclease. Recognizes the chi site generating a DNA molecule suitable for the initiation of homologous recombination. The AddA nuclease domain is required for chi fragment generation; this subunit has the helicase and 3' -&gt; 5' nuclease activities. The protein is ATP-dependent helicase/nuclease subunit A of Listeria innocua serovar 6a (strain ATCC BAA-680 / CLIP 11262).